A 310-amino-acid chain; its full sequence is Protoheme IX farnesyltransferase (310 aa).

Transmembrane regions (helical) follow at residues 30-47 (VTTL…FGAA), 50-70 (GLPL…LVSG), 102-122 (LGHG…YLGL), 126-146 (WLTA…YTPL), 152-172 (ICTT…WTAI), 181-201 (VALF…IAWL), 228-248 (IVIY…LRFA), 251-271 (IYFL…LRMF), and 286-306 (ARQL…VMML).

It belongs to the UbiA prenyltransferase family. Protoheme IX farnesyltransferase subfamily.

The protein localises to the cell inner membrane. It carries out the reaction heme b + (2E,6E)-farnesyl diphosphate + H2O = Fe(II)-heme o + diphosphate. It functions in the pathway porphyrin-containing compound metabolism; heme O biosynthesis; heme O from protoheme: step 1/1. Its function is as follows. Converts heme B (protoheme IX) to heme O by substitution of the vinyl group on carbon 2 of heme B porphyrin ring with a hydroxyethyl farnesyl side group. This Koribacter versatilis (strain Ellin345) protein is Protoheme IX farnesyltransferase.